The following is a 610-amino-acid chain: Autophagy-related protein 22-1 (610 aa).

Positions 1–29 (MIFTSTPPAPPPADAQQRQPRYPGEDTTP) are disordered. Residues 41–61 (YGIAAEVFAVCGVGSFLPLTL) traverse the membrane as a helical segment. Asn90 carries N-linked (GlcNAc...) asparagine glycosylation. 3 helical membrane-spanning segments follow: residues 120 to 140 (SFAMYTFSLAVLVQALTLISF), 153 to 173 (LLLTFGLIGSVSSMLFVFISP), and 177 to 197 (ILGAILVVIGVTCLGSSFVVL). The interval 216–242 (KTEGEELPHLDSSGEYTRSGSFNRGDN) is disordered. Residues 229–239 (GEYTRSGSFNR) show a composition bias toward polar residues. The next 4 helical transmembrane spans lie at 277-297 (GVGLGYCAAVLVQVLSILLLF), 310-330 (TLPLRFVLLLVGIWWFSFTVV), 379-399 (VVIFLIAWFLLSDAMATVSGT), and 415-435 (VGLLSITATLSGMTGAFLWPV). Residue Asn445 is glycosylated (N-linked (GlcNAc...) asparagine). 4 helical membrane-spanning segments follow: residues 450–470 (LCIALFEIIPLYGMLAYIPLV), 485–507 (FPLGIVHGLVSGGLSSYCRSFFG), 527–547 (KGSSFIGPAVVGVLIDATGQV), and 550–570 (GFFFIAVLIVLPIPLIWMVNA). A disordered region spans residues 586-610 (KSHGENSSEFGHPSEEAEGLLARNP). The N-linked (GlcNAc...) asparagine glycan is linked to Asn591.

This sequence belongs to the ATG22 family.

The protein resides in the vacuole membrane. Vacuolar effluxer which mediate the efflux of amino acids resulting from autophagic degradation. The release of autophagic amino acids allows the maintenance of protein synthesis and viability during nitrogen starvation. The chain is Autophagy-related protein 22-1 (atg22-1) from Aspergillus clavatus (strain ATCC 1007 / CBS 513.65 / DSM 816 / NCTC 3887 / NRRL 1 / QM 1276 / 107).